The following is a 636-amino-acid chain: Sodium-dependent nutrient amino acid transporter 1 (636 aa).

The disordered stretch occupies residues 1–40 (MELKTMPQNGANNGNPQGNTSNNNNTNDSSNSNSNNNNKT). Residues 1 to 50 (MELKTMPQNGANNGNPQGNTSNNNNTNDSSNSNSNNNNKTERTNWSNGLE) are Cytoplasmic-facing. Residues 7–40 (PQNGANNGNPQGNTSNNNNTNDSSNSNSNNNNKT) are compositionally biased toward low complexity. Transmembrane regions (helical) follow at residues 51–71 (FLMS…FPFT), 78–98 (GAFL…MYYL), and 131–151 (TICI…YLAV). An N-linked (GlcNAc...) asparagine glycan is attached at asparagine 184. Transmembrane regions (helical) follow at residues 225–245 (PDWK…LVIM), 254–274 (AAYF…GRAV), 303–323 (AVVQ…MFSS), 337–357 (IVTT…FAIL), 397–417 (LFSA…IVAL), 436–456 (VALV…TPGG), 469–489 (TYVV…IYGV), 511–531 (CWLI…MVTI), and 547–567 (VAGW…GWWY).

It belongs to the sodium:neurotransmitter symporter (SNF) (TC 2.A.22) family.

It localises to the membrane. Unusual broad substrate spectrum amino acid:sodium cotransporter that promotes absorption of the D isomers of essential amino acids. Neutral amino acids are the preferred substrates, especially methionine and phenylalanine. This chain is Sodium-dependent nutrient amino acid transporter 1, found in Drosophila grimshawi (Hawaiian fruit fly).